The sequence spans 195 residues: BH3-interacting domain death agonist (195 aa).

The residue at position 1 (M1) is an N-acetylmethionine. Residues 58 to 69 are compositionally biased toward polar residues; that stretch reads TDGSQASRSFNQ. The disordered stretch occupies residues 58 to 77; the sequence is TDGSQASRSFNQGRIEPDSE. Position 78 is a phosphoserine (S78). Positions 87–100 match the BH3 motif; it reads ARHLAQIGDEMDHN.

In terms of assembly, forms heterodimers either with the pro-apoptotic protein BAX or the anti-apoptotic protein BCL2. Interacts with PLEKHN1. As to quaternary structure, interacts with ITCH. Interacts with MTCH2. TNF-alpha induces caspase-mediated cleavage into a major p15 and minor p13 and p11 products. Cleaved by CASP6 into a major p15 and minor p13 products, leading to release of cytochrome c and subsequent nonalcoholic steatohepatitis. Post-translationally, ubiquitinated by ITCH; ubiquitination results in proteasome-dependent degradation.

The protein localises to the cytoplasm. Its subcellular location is the mitochondrion membrane. The protein resides in the mitochondrion outer membrane. In terms of biological role, induces caspases and apoptosis. Counters the protective effect of BCL2. Functionally, induces caspase activation and apoptosis. Allows the release of cytochrome c. In Mus musculus (Mouse), this protein is BH3-interacting domain death agonist (Bid).